The following is an 873-amino-acid chain: Zinc fingers and homeoboxes protein 1 (873 aa).

The tract at residues 1 to 63 is disordered; sequence MASRRKSTTP…ESVDSDNQQN (63 aa). Residues 18–30 are compositionally biased toward acidic residues; that stretch reads QDPDLELISDLEE. Threonine 36 is subject to Phosphothreonine. Serine 45, serine 47, and serine 48 each carry phosphoserine. 2 consecutive C2H2-type zinc fingers follow at residues 70–93 and 102–125; these read YECKYCTFQTPDLNMFTFHVDSEH and YVCVECNFLTKRYDALSEHNLKYH. A Glycyl lysine isopeptide (Lys-Gly) (interchain with G-Cter in SUMO2) cross-link involves residue lysine 159. Residues 198–247 are disordered; the sequence is VHHNSAEGTSEEKENGVKASREENAENTSSSASESNTSTSTVNQVHPSPA. Serine 202 carries the post-translational modification Phosphoserine. Residues 207-221 are compositionally biased toward basic and acidic residues; sequence SEEKENGVKASREEN. The span at 223–238 shows a compositional bias: low complexity; it reads ENTSSSASESNTSTST. The tract at residues 272–432 is required for dimerization; that stretch reads NSNLVPKVLI…QTNVQKSQVP (161 aa). Residues 272–564 are required for interaction with NFYA; the sequence is NSNLVPKVLI…SQPKQSWNPF (293 aa). The segment at residues 284-346 is a DNA-binding region (homeobox 1); the sequence is NSIPTYNAAL…LKHGVSWTPE (63 aa). The tract at residues 430 to 455 is disordered; it reads QVPAAQPAAETKPATAAVPSSPSVRP. Residues lysine 441 and lysine 485 each participate in a glycyl lysine isopeptide (Lys-Gly) (interchain with G-Cter in SUMO2) cross-link. The segment at residues 464 to 526 is a DNA-binding region (homeobox 2); the sequence is SFGIRAKKTK…YNQRNSKSNQ (63 aa). Disordered stretches follow at residues 540 to 568, 627 to 664, and 731 to 767; these read IDSSDETPEPPAAAASQPKQSWNPFPDFA, DEKVEVDESNVGSSKEEPGENSPGDEAVAPKSAGTGKI, and SSSLNGLSSLRKRGRGRPKGRGRGRPRGRPRGGKRMN. The span at 551–560 shows a compositional bias: low complexity; the sequence is AAAASQPKQS. Residues 569-631 constitute a DNA-binding region (homeobox 3); sequence PQKFKEKTAE…TKALKDEKVE (63 aa). Residue lysine 629 forms a Glycyl lysine isopeptide (Lys-Gly) (interchain with G-Cter in SUMO2) linkage. Serine 648 carries the phosphoserine modification. Residues 660–722 constitute a DNA-binding region (homeobox 4); the sequence is GTGKICKKTP…YAWKNGNLKW (63 aa). The tract at residues 734 to 768 is required for nuclear localization; sequence LNGLSSLRKRGRGRPKGRGRGRPRGRPRGGKRMNT. Positions 740 to 764 are enriched in basic residues; sequence LRKRGRGRPKGRGRGRPRGRPRGGK. A Phosphoserine modification is found at serine 774. Positions 777–832 form a DNA-binding region, homeobox 5; that stretch reads KFKTGTAILKDYYLKHKFLNEQDLDELVNRSHMGYEQVREWFAERQRRSELGIELF. Residues 829–873 are disordered; it reads IELFEENEEEDEVIDDQEEDEEETDDSDTWEPPRHVKRKLSKSDD. Over residues 831 to 857 the composition is skewed to acidic residues; that stretch reads LFEENEEEDEVIDDQEEDEEETDDSDT. Positions 831-873 are required for repressor activity; it reads LFEENEEEDEVIDDQEEDEEETDDSDTWEPPRHVKRKLSKSDD. The segment covering 863–873 has biased composition (basic residues); that stretch reads HVKRKLSKSDD.

This sequence belongs to the ZHX family. In terms of assembly, forms homodimers. Heterodimer (via HD1 domain) with ZHX2 (via HD1 domain). Also forms a heterodimer with ZHX3 which is a prerequisite for repressor activity. Interacts with ATF7IP and NFYA. Interacts (via homeobox domains) with DNMT3B (via PWWP domain). In terms of tissue distribution, ubiquitously expressed.

The protein resides in the nucleus. Its function is as follows. Acts as a transcriptional repressor. Increases DNMT3B-mediated repressive transcriptional activity when DNMT3B is tethered to DNA. May link molecule between DNMT3B and other co-repressor proteins. The polypeptide is Zinc fingers and homeoboxes protein 1 (Zhx1) (Rattus norvegicus (Rat)).